Here is a 291-residue protein sequence, read N- to C-terminus: Small ribosomal subunit protein uS2 (291 aa).

Residues 254-291 form a disordered region; it reads RTSNRDNKNNKNNNNTDNTDNAASIKEEDLIGGSNNEN. The segment covering 263–277 has biased composition (low complexity); the sequence is NKNNNNTDNTDNAAS.

Belongs to the universal ribosomal protein uS2 family.

In Ehrlichia canis (strain Jake), this protein is Small ribosomal subunit protein uS2.